We begin with the raw amino-acid sequence, 969 residues long: Proprotein convertase subtilisin/kexin type 6 (969 aa).

The span at Met-1–Arg-16 shows a compositional bias: pro residues. The tract at residues Met-1–Pro-39 is disordered. The N-terminal stretch at Met-1 to Ala-63 is a signal peptide. The segment covering Gly-26–Pro-39 has biased composition (gly residues). Positions Pro-64–Arg-149 are excised as a propeptide. Residues Met-168 to Val-487 enclose the Peptidase S8 domain. Catalysis depends on charge relay system residues Asp-205 and His-246. Residue Asn-259 is glycosylated (N-linked (GlcNAc...) asparagine). The active-site Charge relay system is Ser-420. Residues Ala-495–His-635 enclose the P/Homo B domain. The Cell attachment site signature appears at Arg-553 to Asp-555. A disordered region spans residues Glu-658–Thr-683. FU repeat units lie at residues Thr-692 to Gly-739, Ala-743 to Ala-790, Gln-794 to Phe-838, Leu-842 to Pro-887, and His-895 to Cys-943. Residues Cys-695 to Ile-930 form a CRM (Cys-rich motif) region. Asn-914 and Asn-932 each carry an N-linked (GlcNAc...) asparagine glycan. Positions Thr-931–Gly-969 constitute a PLAC domain.

This sequence belongs to the peptidase S8 family. In terms of assembly, the PACE4A-I precursor protein seems to exist in the reticulum endoplasmic as both a monomer and a dimer-sized complex whereas mature PACE4A-I exists only as a monomer, suggesting that propeptide cleavage affects its tertiary or quaternary structure. Interacts (immature form including the propeptide) with RCN3; probably involved in the maturation and the secretion of PCSK6. The cofactor is Ca(2+). Each PACE4 isoform exhibits a unique restricted distribution. Isoform PACE4A-I is expressed in heart, brain, placenta, lung, skeletal muscle, kidney, pancreas, but at comparatively higher levels in the liver. Isoform PACE4A-II is at least expressed in placenta. Isoform PACE4B was only found in the embryonic kidney cell line from which it was isolated. Isoform PACE4C and isoform PACE4D are expressed in placenta. Isoform PACE4E-I is expressed in cerebellum, placenta and pituitary. Isoform PACE4E-II is at least present in cerebellum.

Its subcellular location is the secreted. The protein localises to the endoplasmic reticulum. It is found in the endomembrane system. Functionally, serine endoprotease that processes various proproteins by cleavage at paired basic amino acids, recognizing the RXXX[KR]R consensus motif. Likely functions in the constitutive secretory pathway, with unique restricted distribution in both neuroendocrine and non-neuroendocrine tissues. In Homo sapiens (Human), this protein is Proprotein convertase subtilisin/kexin type 6 (PCSK6).